We begin with the raw amino-acid sequence, 22 residues long: Mu-conotoxin GIIIB (22 aa).

Cystine bridges form between C3-C15, C4-C20, and C10-C21. 4-hydroxyproline; partial is present on residues P6 and P7. P17 carries the 4-hydroxyproline modification. Alanine amide is present on A22.

This sequence belongs to the conotoxin M superfamily. In terms of tissue distribution, expressed by the venom duct.

Its subcellular location is the secreted. Its function is as follows. Mu-conotoxins block voltage-gated sodium channels (Nav). The sequence is that of Mu-conotoxin GIIIB from Conus geographus (Geography cone).